We begin with the raw amino-acid sequence, 390 residues long: Flap endonuclease 1-1 (390 aa).

The segment at 1–108 (MGIHQLMQFL…GELARRKKLK (108 aa)) is N-domain. D34 contacts Mg(2+). R74 contributes to the DNA binding site. Residues D90, E162, E164, D183, and D185 each contribute to the Mg(2+) site. The interval 126–254 (QALLQHQRTT…GTAYKLIKEF (129 aa)) is I-domain. E162 contacts DNA. The DNA site is built by G232 and D234. A Mg(2+)-binding site is contributed by D234. The tract at residues 348–356 (FQSRLENFF) is interaction with PCNA. Residues 359–390 (TTKIIHPNNSKAKGKANKKNEQTQKSGGKKKI) are disordered.

This sequence belongs to the XPG/RAD2 endonuclease family. FEN1 subfamily. In terms of assembly, interacts with PCNA. Three molecules of FEN1 bind to one PCNA trimer with each molecule binding to one PCNA monomer. PCNA stimulates the nuclease activity without altering cleavage specificity. Mg(2+) is required as a cofactor. In terms of processing, phosphorylated. Phosphorylation upon DNA damage induces relocalization to the nuclear plasma.

It is found in the nucleus. The protein localises to the nucleolus. Its subcellular location is the nucleoplasm. It localises to the mitochondrion. Functionally, structure-specific nuclease with 5'-flap endonuclease and 5'-3' exonuclease activities involved in DNA replication and repair. During DNA replication, cleaves the 5'-overhanging flap structure that is generated by displacement synthesis when DNA polymerase encounters the 5'-end of a downstream Okazaki fragment. It enters the flap from the 5'-end and then tracks to cleave the flap base, leaving a nick for ligation. Also involved in the long patch base excision repair (LP-BER) pathway, by cleaving within the apurinic/apyrimidinic (AP) site-terminated flap. Acts as a genome stabilization factor that prevents flaps from equilibrating into structures that lead to duplications and deletions. Also possesses 5'-3' exonuclease activity on nicked or gapped double-stranded DNA, and exhibits RNase H activity. Also involved in replication and repair of rDNA and in repairing mitochondrial DNA. This Paramecium tetraurelia protein is Flap endonuclease 1-1.